Here is a 352-residue protein sequence, read N- to C-terminus: Ni-sirohydrochlorin a,c-diamide reductive cyclase complex, component CfbD (352 aa).

Belongs to the NifD/NifK/NifE/NifN family. In terms of assembly, homodimer or monomer. The Ni-sirohydrochlorin a,c-diamide reductive cyclase complex is composed of a NifH homolog component CfbC and a NifD homolog component CfbD. [4Fe-4S] cluster is required as a cofactor.

The catalysed reaction is Ni-sirohydrochlorin a,c-diamide + 3 AH2 + ATP + H2O = 15,17(3)-seco-F430-17(3)-acid + 3 A + ADP + phosphate. In terms of biological role, involved in the biosynthesis of the unique nickel-containing tetrapyrrole coenzyme F430, the prosthetic group of methyl-coenzyme M reductase (MCR), which plays a key role in methanogenesis and anaerobic methane oxidation. Catalyzes both the six-electron reduction of the tetrahydroporphyrin ring system and the gamma-lactamization of the c-acetamide side chain of Ni-sirohydrochlorin a,c-diamide to yield 15,17(3)-seco-F430-17(3)-acid (seco-F430), the last intermediate in the biosynthesis of the coenzyme F430. This Methanocaldococcus jannaschii (strain ATCC 43067 / DSM 2661 / JAL-1 / JCM 10045 / NBRC 100440) (Methanococcus jannaschii) protein is Ni-sirohydrochlorin a,c-diamide reductive cyclase complex, component CfbD.